Reading from the N-terminus, the 543-residue chain is Sodium/glucose cotransporter (543 aa).

The next 14 membrane-spanning stretches (helical) occupy residues 10–30, 45–65, 79–99, 129–149, 156–176, 193–213, 246–266, 287–307, 345–365, 401–421, 427–447, 455–475, 483–503, and 523–543; these read FIDI…GLWV, FLAG…AANI, SIGL…IIVG, ILAV…VLYL, TILG…ALVY, VFFL…FIGG, LPGI…YWGF, IVFA…PGIA, FLPV…IVSS, TAAV…GGIG, IQEY…LGLF, GAII…FMPL, MLYT…STSI, and SFNI…TLFW.

It is found in the cell membrane. Its function is as follows. Actively transports glucose into cells by Na(+) cotransport. This chain is Sodium/glucose cotransporter (sglT), found in Vibrio parahaemolyticus.